The primary structure comprises 258 residues: TLC domain-containing protein 4-A (258 aa).

6 helical membrane-spanning segments follow: residues Leu-5–Ile-25, Phe-52–Asp-72, Phe-85–Leu-105, Tyr-116–Leu-132, Pro-171–Ile-191, and Ile-212–Trp-232. Positions Gly-43 to Lys-245 constitute a TLC domain.

It belongs to the TLCD4 family.

It is found in the membrane. This is TLC domain-containing protein 4-A (tlcd4-a) from Xenopus laevis (African clawed frog).